The primary structure comprises 351 residues: Translation initiation factor eIF2B subunit beta (351 aa).

It belongs to the eIF-2B alpha/beta/delta subunits family. In terms of assembly, component of the translation initiation factor 2B (eIF2B) complex which is a heterodecamer of two sets of five different subunits: alpha, beta, gamma, delta and epsilon. Subunits alpha, beta and delta comprise a regulatory subcomplex and subunits epsilon and gamma comprise a catalytic subcomplex. Within the complex, the hexameric regulatory complex resides at the center, with the two heterodimeric catalytic subcomplexes bound on opposite sides.

The protein localises to the cytoplasm. It is found in the cytosol. Its activity is regulated as follows. Activated by the chemical integrated stress response (ISR) inhibitor ISRIB which stimulates guanine nucleotide exchange factor activity for both phosphorylated and unphosphorylated eIF2. Functionally, acts as a component of the translation initiation factor 2B (eIF2B) complex, which catalyzes the exchange of GDP for GTP on eukaryotic initiation factor 2 (eIF2) gamma subunit. Its guanine nucleotide exchange factor activity is repressed when bound to eIF2 complex phosphorylated on the alpha subunit, thereby limiting the amount of methionyl-initiator methionine tRNA available to the ribosome and consequently global translation is repressed. The chain is Translation initiation factor eIF2B subunit beta (EIF2B2) from Bos taurus (Bovine).